The following is a 227-amino-acid chain: 7-cyano-7-deazaguanine synthase (227 aa).

An ATP-binding site is contributed by 8 to 18; it reads FSGGQDSTTCL. Cys187, Cys196, Cys199, and Cys202 together coordinate Zn(2+).

Belongs to the QueC family. The cofactor is Zn(2+).

The catalysed reaction is 7-carboxy-7-deazaguanine + NH4(+) + ATP = 7-cyano-7-deazaguanine + ADP + phosphate + H2O + H(+). The protein operates within purine metabolism; 7-cyano-7-deazaguanine biosynthesis. In terms of biological role, catalyzes the ATP-dependent conversion of 7-carboxy-7-deazaguanine (CDG) to 7-cyano-7-deazaguanine (preQ(0)). The polypeptide is 7-cyano-7-deazaguanine synthase (Aliivibrio fischeri (strain ATCC 700601 / ES114) (Vibrio fischeri)).